A 290-amino-acid chain; its full sequence is Plasma membrane ascorbate-dependent reductase CYBRD1 (290 aa).

Over 1-7 (MAMEGYR) the chain is Cytoplasmic. The helical transmembrane segment at 8–32 (GFLGLLVSALLVGFLSVIFVLIWVL) threads the bilayer. The Cytochrome b561 domain maps to 15–220 (SALLVGFLSV…FGALIFWIVT (206 aa)). At 33-47 (HFREGLGWNGSGLEF) the chain is on the extracellular side. The chain crosses the membrane as a helical span at residues 48-69 (NWHPVLAVTGFVFIQGIAIIVY). Heme b-binding residues include H50, R70, and K79. Over 70–78 (RLPWTWKCS) the chain is Cytoplasmic. Residues K79 and K83 each coordinate L-ascorbate. The helical transmembrane segment at 79–105 (KLLMKSIHAGLNAVAAILAIISVVAVF) threads the bilayer. H86 is a binding site for heme b. Topologically, residues 106–118 (EYHNVQKVPHMYS) are extracellular. Position 108 (H108) interacts with Fe(3+). Heme b contacts are provided by residues 115-118 (HMYS) and H120. A helical transmembrane segment spans residues 119–144 (LHSWVGLTALILYIQQLVVGFFVFLL). Residues 145–151 (PWAPPSL) lie on the Cytoplasmic side of the membrane. L-ascorbate is bound at residue R152. Residues 152 to 179 (RAIVMPIHVYSGLLLFGTVIATVLMGVT) form a helical membrane-spanning segment. Residues H159 and E180 each coordinate heme b. The Extracellular segment spans residues 180–197 (EKLFFVLKHPSYHSFPPE). A helical transmembrane segment spans residues 198–222 (GVFTNTLGLLILVFGALIFWIVTRP). Residues 223 to 290 (QWKRPREPGS…LADSGQRSTM (68 aa)) are Cytoplasmic-facing. Position 225 (K225) interacts with heme b. S232 carries the phosphoserine modification. Residues 257 to 290 (SMDAADPADAESSSEGAARKRTLGLADSGQRSTM) are disordered. Residues 260–272 (AADPADAESSSEG) show a composition bias toward low complexity. At T289 the chain carries Phosphothreonine.

In terms of assembly, homodimer. The cofactor is heme b. In terms of tissue distribution, highly expressed in the brush-border membrane of duodenal enterocytes (at protein level). Also expressed in liver and spleen.

The protein localises to the cell membrane. It is found in the apical cell membrane. The catalysed reaction is Fe(3+)(out) + L-ascorbate(in) = monodehydro-L-ascorbate radical(in) + Fe(2+)(out) + H(+). It carries out the reaction Cu(2+)(out) + L-ascorbate(in) = Cu(+)(out) + monodehydro-L-ascorbate radical(in) + H(+). It catalyses the reaction monodehydro-L-ascorbate radical(out) + L-ascorbate(in) = monodehydro-L-ascorbate radical(in) + L-ascorbate(out). Plasma membrane reductase that uses cytoplasmic ascorbate as an electron donor to reduce extracellular Fe(3+) into Fe(2+). Probably functions in dietary iron absorption at the brush border of duodenal enterocytes by producing Fe(2+), the divalent form of iron that can be transported into enterocytes. It is also able to reduce extracellular monodehydro-L-ascorbate and may be involved in extracellular ascorbate regeneration by erythrocytes in blood. May also act as a ferrireductase in airway epithelial cells. May also function as a cupric transmembrane reductase. In Mus musculus (Mouse), this protein is Plasma membrane ascorbate-dependent reductase CYBRD1.